We begin with the raw amino-acid sequence, 343 residues long: 4-hydroxy-2-oxovalerate aldolase 2 (343 aa).

Residues 5–255 enclose the Pyruvate carboxyltransferase domain; the sequence is ITIVDTTLRD…DTGVDLFPLI (251 aa). Substrate-binding positions include 13-14, Ser-167, and His-194; that span reads RD. Asp-14 is a binding site for Mn(2+). Positions 194 and 196 each coordinate Mn(2+). Tyr-285 contributes to the substrate binding site.

The protein belongs to the 4-hydroxy-2-oxovalerate aldolase family.

The enzyme catalyses (S)-4-hydroxy-2-oxopentanoate = acetaldehyde + pyruvate. The chain is 4-hydroxy-2-oxovalerate aldolase 2 from Rhodococcus jostii (strain RHA1).